The following is a 299-amino-acid chain: Biotin transporter (299 aa).

The next 10 membrane-spanning stretches (helical) occupy residues Ala2 to Leu22, Val26 to Phe46, Thr56 to Phe76, Tyr81 to Ile101, Leu110 to Tyr130, Phe137 to Gly157, Ala172 to Gly192, Leu202 to Trp222, Thr233 to Trp253, and Gln256 to His276. EamA domains follow at residues Leu3 to Ile128 and Val139 to Trp274.

The protein belongs to the drug/metabolite transporter (DMT) superfamily. 10 TMS drug/metabolite exporter (DME) (TC 2.A.7.3) family.

It localises to the cell inner membrane. It carries out the reaction biotin(in) = biotin(out). Functionally, uptake of biotin. The chain is Biotin transporter from Salmonella typhi.